A 505-amino-acid chain; its full sequence is MKPTFPAIVTTAEMQAIEGAMFNGGLPIPALMEKVGQRLSHYLQAHFPTSQYPRVAVLAGPGHNGGDALVVARELWHRGYQVKLWQPFERLKPLTADHARYARFLGLPFVERVEALQEVDVIVDGLFGFGLERELTGELAHAIDEINTWPQPRVSIDVPSGLHSDTGAVLGTAIRADRTLCLGLWKRGLLVEEAQPWVGQGVLIPFDIPSVVIETALASAPRRYCLDDSCWQALPLSRSPITHKYQQGQLLLIGGSGQFGGSILLSALAARCTGVGMLVVAVPQSLKSLVLSRVPDAIVVGCPETPRGAIARLPEGLELGKFSAIACGPGLTPEAVSVVATVLRAETSLVLDADALNILATLSPWPLPSGTILTPHYGEFRRLFPDLVGTAGDRLDQVIAAARWSNAIVLLKGARTAIASARGDLWINPHSTPALARGGSGDVLTGLIGGLLAQQEALRATYGGVWWHAQAALEAEQQATSLGVYPEQLIAHLLPTLRRALAARV.

Residues 1–219 form an NAD(P)H-hydrate epimerase region; it reads MKPTFPAIVT…SVVIETALAS (219 aa). Residues 14–214 enclose the YjeF N-terminal domain; sequence MQAIEGAMFN…PFDIPSVVIE (201 aa). The tract at residues 63-67 is NADPHX 1; for epimerase activity; the sequence is HNGGD. K(+) contacts are provided by Asn64 and Asp124. Residues 128 to 134 are NADPHX 1; for epimerase activity; sequence GFGLERE. A (6S)-NADPHX-binding site is contributed by Asp157. Ser160 is a binding site for K(+). The region spanning 226–500 is the YjeF C-terminal domain; it reads LDDSCWQALP…AHLLPTLRRA (275 aa). The tract at residues 227-505 is ADP-dependent (S)-NAD(P)H-hydrate dehydratase; it reads DDSCWQALPL…TLRRALAARV (279 aa). Gly330 is a binding site for (6S)-NADPHX. Positions 376–382 are NADPHX 2; for dehydratase activity; it reads HYGEFRR. ADP contacts are provided by residues 412–416 and 432–441; these read KGART and TPALARGGSG. Asp442 serves as a coordination point for (6S)-NADPHX.

It in the N-terminal section; belongs to the NnrE/AIBP family. This sequence in the C-terminal section; belongs to the NnrD/CARKD family. It depends on K(+) as a cofactor.

The enzyme catalyses (6S)-NADHX + ADP = AMP + phosphate + NADH + H(+). The catalysed reaction is (6S)-NADPHX + ADP = AMP + phosphate + NADPH + H(+). It catalyses the reaction (6R)-NADHX = (6S)-NADHX. It carries out the reaction (6R)-NADPHX = (6S)-NADPHX. Bifunctional enzyme that catalyzes the epimerization of the S- and R-forms of NAD(P)HX and the dehydration of the S-form of NAD(P)HX at the expense of ADP, which is converted to AMP. This allows the repair of both epimers of NAD(P)HX, a damaged form of NAD(P)H that is a result of enzymatic or heat-dependent hydration. The protein is Bifunctional NAD(P)H-hydrate repair enzyme Nnr (nnr) of Thermosynechococcus vestitus (strain NIES-2133 / IAM M-273 / BP-1).